Reading from the N-terminus, the 424-residue chain is Imidazolonepropionase (424 aa).

Positions 84 and 86 each coordinate Fe(3+). Positions 84 and 86 each coordinate Zn(2+). Arg-93, Tyr-156, and His-189 together coordinate 4-imidazolone-5-propanoate. An N-formimidoyl-L-glutamate-binding site is contributed by Tyr-156. His-254 is a Fe(3+) binding site. His-254 is a Zn(2+) binding site. Glu-257 serves as a coordination point for 4-imidazolone-5-propanoate. Asp-328 is a Fe(3+) binding site. Residue Asp-328 coordinates Zn(2+). Asn-330 and Gly-332 together coordinate N-formimidoyl-L-glutamate. Ser-333 lines the 4-imidazolone-5-propanoate pocket.

Belongs to the metallo-dependent hydrolases superfamily. HutI family. Zn(2+) serves as cofactor. It depends on Fe(3+) as a cofactor.

The protein resides in the cytoplasm. The catalysed reaction is 4-imidazolone-5-propanoate + H2O = N-formimidoyl-L-glutamate. Its pathway is amino-acid degradation; L-histidine degradation into L-glutamate; N-formimidoyl-L-glutamate from L-histidine: step 3/3. Its function is as follows. Catalyzes the hydrolytic cleavage of the carbon-nitrogen bond in imidazolone-5-propanoate to yield N-formimidoyl-L-glutamate. It is the third step in the universal histidine degradation pathway. The sequence is that of Imidazolonepropionase from Geobacillus thermodenitrificans (strain NG80-2).